The primary structure comprises 267 residues: Phosphonoacetaldehyde hydrolase (267 aa).

Aspartate 10 serves as the catalytic Nucleophile. Mg(2+) is bound by residues aspartate 10 and alanine 12. The active-site Schiff-base intermediate with substrate is the lysine 51. Aspartate 184 serves as a coordination point for Mg(2+).

It belongs to the HAD-like hydrolase superfamily. PhnX family. In terms of assembly, homodimer. It depends on Mg(2+) as a cofactor.

It catalyses the reaction phosphonoacetaldehyde + H2O = acetaldehyde + phosphate + H(+). Involved in phosphonate degradation. The protein is Phosphonoacetaldehyde hydrolase of Paraburkholderia xenovorans (strain LB400).